Here is a 421-residue protein sequence, read N- to C-terminus: MAPSWRFFVCFLLWGGTELCSPQPVWQDEGQRLRPSKPPTVMVECQEAQLVVIVSKDLFGTGKLIRPADLSLGPAKCEPLVSQDTDAVVRFEVGLHECGSSLQVTDDALVYSTFLRHDPRPAGNLSILRTNRAEVPIECHYPRQGNVSSWAILPTWVPFRTTVFSEEKLVFSLRLMEENWSAEKMTPTFQLGDRAHLQAQVHTGSHVPLRLFVDHCVATLTPDWNTSPSHTIVDFHGCLVDGLTEASSAFKAPRPGPETLQFTVDVFHFANDSRNTIYITCHLKVTPADRVPDQLNKACSFSKSSNRWSPVEGPAVICRCCHKGQCGTPSLSRKLSMPKRQSAPRSRRHVTDEADVTVGPLIFLGKTSDHGVEGSTSSPTSVMVGLGLATVVTLTLATIVLGVPRRRRAAAHLVCPVSASQ.

A signal peptide spans 1-22; it reads MAPSWRFFVCFLLWGGTELCSP. The residue at position 23 (glutamine 23) is a Pyrrolidone carboxylic acid. Residues 23–381 lie on the Extracellular side of the membrane; the sequence is QPVWQDEGQR…VEGSTSSPTS (359 aa). Residues 44 to 306 form the ZP domain; the sequence is ECQEAQLVVI…KACSFSKSSN (263 aa). 2 disulfide bridges follow: cysteine 45–cysteine 139 and cysteine 77–cysteine 98. 2 N-linked (GlcNAc...) asparagine glycosylation sites follow: asparagine 124 and asparagine 146. Threonine 155, threonine 161, and threonine 162 each carry an O-linked (GalNAc...) threonine glycan. N-linked (GlcNAc...) asparagine glycosylation is found at asparagine 179 and asparagine 271. Intrachain disulfides connect cysteine 216/cysteine 281 and cysteine 238/cysteine 299. The disordered stretch occupies residues 331–351; sequence LSRKLSMPKRQSAPRSRRHVT. The propeptide at 333–421 is removed in mature form; that stretch reads RKLSMPKRQS…HLVCPVSASQ (89 aa). The chain crosses the membrane as a helical span at residues 382–402; it reads VMVGLGLATVVTLTLATIVLG. At 403 to 421 the chain is on the cytoplasmic side; that stretch reads VPRRRRAAAHLVCPVSASQ.

This sequence belongs to the ZP domain family. ZPC subfamily. Polymers of ZP2 and ZP3 organized into long filaments cross-linked by ZP1 homodimers. Interacts with ZP1 and ZP2. Proteolytically cleaved before the transmembrane segment to yield the secreted ectodomain incorporated in the zona pellucida. Post-translationally, O-glycosylated; removal of O-linked glycans may play an important role in the post-fertilization block to polyspermy. In terms of processing, all cysteine residues are involved in disulfide bonds. As to expression, expressed in oocytes.

It is found in the zona pellucida. The protein resides in the cell membrane. Functionally, component of the zona pellucida, an extracellular matrix surrounding oocytes which mediates sperm binding, induction of the acrosome reaction and prevents post-fertilization polyspermy. The zona pellucida is composed of 3 to 4 glycoproteins, ZP1, ZP2, ZP3, and ZP4. ZP3 is essential for zona matrix formation. May not have a sperm-binding activity by itself but may increase sperm-binding activity of ZPB. The sequence is that of Zona pellucida sperm-binding protein 3 (ZP3) from Sus scrofa (Pig).